We begin with the raw amino-acid sequence, 191 residues long: Chromobox protein homolog 5 (191 aa).

The interval 1–21 (MGKKTKRTADSSSSEDEEEYV) is disordered. Residues Ser-11, Ser-12, Ser-13, and Ser-14 each carry the phosphoserine modification. A Chromo 1 domain is found at 20-78 (YVVEKVLDRRMVKGQVEYLLKWKGFSEEHNTWEPEKNLDCPELISEFMKKYKKMKEGEN). A Glycyl lysine isopeptide (Lys-Gly) (interchain with G-Cter in SUMO2) cross-link involves residue Lys-32. Lys-40 carries the N6-acetyllysine modification. Residues 70-117 (YKKMKEGENNKPREKSEGNKRKSSFSNSADDIKSKKKREQSNDIARGF) form a disordered region. Residues 73–89 (MKEGENNKPREKSEGNK) show a composition bias toward basic and acidic residues. Residue Lys-91 forms a Glycyl lysine isopeptide (Lys-Gly) (interchain with G-Cter in SUMO2) linkage. Phosphoserine is present on residues Ser-92, Ser-93, Ser-95, and Ser-97. Residues Lys-102, Lys-106, Lys-154, and Lys-184 each participate in a glycyl lysine isopeptide (Lys-Gly) (interchain with G-Cter in SUMO2) cross-link. The Chromo 2; shadow subtype domain occupies 121 to 179 (LEPEKIIGATDSCGDLMFLMKWKDTDEADLVLAKEANVKCPQIVIAFYEERLTWHAYPE).

Homodimer. Interacts with histone H3 methylated at 'Lys-9'. Interacts (via Chromo 2; shadow subtype domain) with the MIS12 complex subunit NSL1; the interaction is direct, involves dimeric CBX5, and occurs during interphase. Interacts with POGZ; POGZ and PXVXL motif-containing proteins such as INCENP and TRIM28 compete for interaction with CBX5. Interacts with LRIF1 (via PxVxL motif). Interacts with INCENP. Interacts with TRIM24. Interacts (via the chromoshadow domain) with ATRX; the interaction is direct. Interacts (via the chromoshadow domain) with CHAF1A; the interaction is direct. Interacts (via the chromoshadow domain) with LBR; the interaction is direct. Interacts (via the chromoshadow domain) with NIPBL; the interaction is direct. Interacts (via the chromoshadow domain) with SP100; the interaction is direct. Interacts (via the chromoshadow domain) with STAM2; the interaction is direct. Interacts (via the chromoshadow domain) with TRIM28; the interaction is direct. Interacts (via the chromoshadow domain) with CBX3; the interaction is direct. Interacts with PRR14 (via N-terminus). Interacts with RRP1B. Interacts with HNRNPU (via C-terminus); this interaction is, at least in part, RNA-dependent. Interacts with ZNF263; recruited to the SIX3 promoter along with other proteins involved in chromatin modification and transcriptional corepression where it contributes to transcriptional repression. Interacts with AURKB during mitosis. Interacts with CHAMP1. Interacts with BAHD1. Interacts with HP1BP3. Interacts with CHD3. Interacts with CHD4. Interacts with SMYD5. Interacts with KMT5B. Interacts with KMT5C. In terms of processing, phosphorylation of HP1 and LBR may be responsible for some of the alterations in chromatin organization and nuclear structure which occur at various times during the cell cycle. Phosphorylated during interphase and possibly hyper-phosphorylated during mitosis. Post-translationally, ubiquitinated.

It localises to the nucleus. Its subcellular location is the chromosome. It is found in the centromere. In terms of biological role, component of heterochromatin that recognizes and binds histone H3 tails methylated at 'Lys-9' (H3K9me), leading to epigenetic repression. In contrast, it is excluded from chromatin when 'Tyr-41' of histone H3 is phosphorylated (H3Y41ph). May contribute to the association of heterochromatin with the inner nuclear membrane by interactions with the lamin-B receptor (LBR). Involved in the formation of kinetochore through interaction with the MIS12 complex subunit NSL1. Required for the formation of the inner centromere. Component of heterochromatin that recognizes and binds histone H3 tails methylated at 'Lys-9' (H3K9me), leading to epigenetic repression. In contrast, it is excluded from chromatin when 'Tyr-41' of histone H3 is phosphorylated (H3Y41ph). Can interact with lamin-B receptor (LBR). This interaction can contribute to the association of the heterochromatin with the inner nuclear membrane. Involved in the formation of functional kinetochore through interaction with MIS12 complex proteins. The chain is Chromobox protein homolog 5 (Cbx5) from Mus musculus (Mouse).